Reading from the N-terminus, the 947-residue chain is ATPase 10, plasma membrane-type (947 aa).

Residues 1-69 are Cytoplasmic-facing; that stretch reads MAEDLDKPLL…EKQENRFVKF (69 aa). The helical transmembrane segment at 70–89 threads the bilayer; that stretch reads LGFMWNPLSWVMEAAALMAI. At 90–101 the chain is on the extracellular side; sequence ALANSQSLGPDW. The helical transmembrane segment at 102 to 122 threads the bilayer; that stretch reads EDFTGIVCLLLINATISFFEE. Over 123–251 the chain is Cytoplasmic; the sequence is NNAGNAAAAL…GHFQQVLTSI (129 aa). The chain crosses the membrane as a helical span at residues 252–272; sequence GNFCICSIAVGMVLEIIIMFP. Topologically, residues 273–281 are extracellular; that stretch reads VQHRSYRIG. Residues 282–299 traverse the membrane as a helical segment; the sequence is INNLLVLLIGGIPIAMPT. The Cytoplasmic portion of the chain corresponds to 300-650; the sequence is VLSVTLAIGS…TSRAIFQRMR (351 aa). Aspartate 337 acts as the 4-aspartylphosphate intermediate in catalysis. Mg(2+) is bound by residues aspartate 595 and aspartate 599. The helical transmembrane segment at 651 to 672 threads the bilayer; sequence NYTVYAVSITIRIVLGFTLLAL. Residues 673 to 677 lie on the Extracellular side of the membrane; it reads IWEYD. A helical membrane pass occupies residues 678-700; that stretch reads FPPFMVLIIAILNDGTIMTISKD. The Cytoplasmic portion of the chain corresponds to 701 to 716; sequence RVRPSPTPESWKLNQI. A helical membrane pass occupies residues 717–737; sequence FATGIVIGTYLALVTVLFYWI. Residues 738–758 are Extracellular-facing; it reads IVSTTFFEKHFHVKSIANNSE. The helical transmembrane segment at 759–779 threads the bilayer; the sequence is QVSSAMYLQVSIISQALIFVT. Topologically, residues 780-791 are cytoplasmic; that stretch reads RSRGWSFFERPG. The helical transmembrane segment at 792-812 threads the bilayer; the sequence is TLLIFAFILAQLAATLIAVYA. Over 813-820 the chain is Extracellular; the sequence is NISFAKIT. A helical membrane pass occupies residues 821 to 841; that stretch reads GIGWRWAGVIWLYSLIFYIPL. At 842–947 the chain is on the cytoplasmic side; sequence DVIKFVFHYA…QRMIRAAHTV (106 aa). Phosphoserine is present on residues serine 897 and serine 929. Residue threonine 946 is modified to Phosphothreonine.

It belongs to the cation transport ATPase (P-type) (TC 3.A.3) family. Type IIIA subfamily. Found primarily in developing seeds. Expressed in guard cells, mesophyll cells, leaves and roots.

The protein localises to the membrane. The enzyme catalyses ATP + H2O + H(+)(in) = ADP + phosphate + 2 H(+)(out). The plasma membrane H(+) ATPase of plants and fungi generates a proton gradient that drives the active transport of nutrients by H(+)-symport. The resulting external acidification and/or internal alkinization may mediate growth responses. In Arabidopsis thaliana (Mouse-ear cress), this protein is ATPase 10, plasma membrane-type (AHA10).